A 252-amino-acid chain; its full sequence is Imidazole glycerol phosphate synthase subunit HisF (252 aa).

Catalysis depends on residues Asp-11 and Asp-130.

Belongs to the HisA/HisF family. In terms of assembly, heterodimer of HisH and HisF.

It localises to the cytoplasm. It catalyses the reaction 5-[(5-phospho-1-deoxy-D-ribulos-1-ylimino)methylamino]-1-(5-phospho-beta-D-ribosyl)imidazole-4-carboxamide + L-glutamine = D-erythro-1-(imidazol-4-yl)glycerol 3-phosphate + 5-amino-1-(5-phospho-beta-D-ribosyl)imidazole-4-carboxamide + L-glutamate + H(+). It participates in amino-acid biosynthesis; L-histidine biosynthesis; L-histidine from 5-phospho-alpha-D-ribose 1-diphosphate: step 5/9. Its function is as follows. IGPS catalyzes the conversion of PRFAR and glutamine to IGP, AICAR and glutamate. The HisF subunit catalyzes the cyclization activity that produces IGP and AICAR from PRFAR using the ammonia provided by the HisH subunit. The chain is Imidazole glycerol phosphate synthase subunit HisF from Bacillus cereus (strain Q1).